Consider the following 118-residue polypeptide: Evasin P1080 (118 aa).

Residues 1 to 19 (FFQLAVFVVILFNINLLSA) form the signal peptide. 3 disulfide bridges follow: C41/C60, C45/C62, and C56/C73. Residue N44 is glycosylated (N-linked (GlcNAc...) asparagine). N-linked (GlcNAc...) asparagine glycosylation is found at N67 and N104.

It localises to the secreted. Salivary chemokine-binding protein which binds to host chemokines CXCL1, CXCL2, CXCL3, CXCL4, CXCL5, CXCL6, CXCL10, CXCL11 and CXCL13. This is Evasin P1080 from Ixodes ricinus (Common tick).